The chain runs to 484 residues: BAHD acyltransferase DCR (484 aa).

The active-site Proton acceptor is His168. Residues 211–233 form a disordered region; it reads LDLTAPKDPNETSNGEDAANPTV. Asp394 functions as the Proton acceptor in the catalytic mechanism. Residues 452–484 are disordered; that stretch reads EEEEDDGKKLTNGNGHVNGNGNGYVNGNGNGFV. Residues 467–484 are compositionally biased toward gly residues; the sequence is HVNGNGNGYVNGNGNGFV.

This sequence belongs to the plant acyltransferase family. In terms of tissue distribution, expressed in root caps and lateral root emerging sites, in trichomes, in epidermis in stems, sepals and anther filaments, and in pollen grains and torpedo stage seeds.

Its subcellular location is the cytoplasm. It is found in the cytosol. Functionally, required for incorporation of 9(10),16-dihydroxy-hexadecanoic acid into cutin. This Arabidopsis thaliana (Mouse-ear cress) protein is BAHD acyltransferase DCR (DCR).